The following is a 463-amino-acid chain: Fumarate hydratase class II (463 aa).

Substrate-binding positions include 98 to 100, 129 to 132, 139 to 141, and Thr187; these read SGT, HPND, and SSN. The disordered stretch occupies residues 121–141; it reads KKGGKSPVHPNDHVNKGQSSN. The active-site Proton donor/acceptor is His188. Ser318 is an active-site residue. Substrate is bound by residues Ser319 and 324-326; that span reads KVN.

It belongs to the class-II fumarase/aspartase family. Fumarase subfamily. As to quaternary structure, homotetramer.

The protein localises to the cytoplasm. The enzyme catalyses (S)-malate = fumarate + H2O. It participates in carbohydrate metabolism; tricarboxylic acid cycle; (S)-malate from fumarate: step 1/1. In terms of biological role, involved in the TCA cycle. Catalyzes the stereospecific interconversion of fumarate to L-malate. In Rickettsia conorii (strain ATCC VR-613 / Malish 7), this protein is Fumarate hydratase class II.